Consider the following 124-residue polypeptide: Large ribosomal subunit protein bL12 (124 aa).

The segment at 93–124 (GAPSTVKEGASKDEAEEAKKKLEEAGASVELK) is disordered. Residues 101–116 (GASKDEAEEAKKKLEE) show a composition bias toward basic and acidic residues.

It belongs to the bacterial ribosomal protein bL12 family. As to quaternary structure, homodimer. Part of the ribosomal stalk of the 50S ribosomal subunit. Forms a multimeric L10(L12)X complex, where L10 forms an elongated spine to which 2 to 4 L12 dimers bind in a sequential fashion. Binds GTP-bound translation factors.

Functionally, forms part of the ribosomal stalk which helps the ribosome interact with GTP-bound translation factors. Is thus essential for accurate translation. The sequence is that of Large ribosomal subunit protein bL12 from Marinobacter nauticus (strain ATCC 700491 / DSM 11845 / VT8) (Marinobacter aquaeolei).